We begin with the raw amino-acid sequence, 443 residues long: Ribosomal protein uS12 methylthiotransferase RimO (443 aa).

One can recognise an MTTase N-terminal domain in the interval 10-120 (PRVGFVSLGC…VMQAVHRHLP (111 aa)). [4Fe-4S] cluster is bound by residues cysteine 19, cysteine 55, cysteine 84, cysteine 151, cysteine 155, and cysteine 158. In terms of domain architecture, Radical SAM core spans 137-375 (LTPQHYAYLK…DFQEDISTQR (239 aa)). One can recognise a TRAM domain in the interval 377–443 (EAKIGREMTV…IHDLYAERVV (67 aa)).

This sequence belongs to the methylthiotransferase family. RimO subfamily. [4Fe-4S] cluster is required as a cofactor.

The protein localises to the cytoplasm. It carries out the reaction L-aspartate(89)-[ribosomal protein uS12]-hydrogen + (sulfur carrier)-SH + AH2 + 2 S-adenosyl-L-methionine = 3-methylsulfanyl-L-aspartate(89)-[ribosomal protein uS12]-hydrogen + (sulfur carrier)-H + 5'-deoxyadenosine + L-methionine + A + S-adenosyl-L-homocysteine + 2 H(+). Its function is as follows. Catalyzes the methylthiolation of an aspartic acid residue of ribosomal protein uS12. In Azoarcus sp. (strain BH72), this protein is Ribosomal protein uS12 methylthiotransferase RimO.